A 1405-amino-acid chain; its full sequence is MNHDVMNIFNPAAEGPSFDRIRIALASPEKIHSWSFGEVKKPETINYRTFKPERDGLFCARIFGPVKDYECLCGKYKRIKYKGIVCEKCGVEVTLARVRRERMGHIELAAPVAHIWFLKSLPSRIAMILDMALKDVERVLYFENYVVIEPGLTPLQPFQLLSEEEYMEAQDEYGEDAFTAGIGAEAVREILINMDLEAECAKVREDMKETGSELKLKKYAKRLKLMENFLTSGNRPEWMIMTVIPVIPPELRPLVPLDGGRFATSDLNDLYRRVINRNNRLKRLIELRAPDIIIRNEKRMLQESVDALFDNGRRGRVITGANKRPLKSLSDMLKGKQGRFRQNLLGKRVDYSGRSVIVVGPDLKLHECGLPKKMALELFKPFIYARLDAKGLSGTVKQSKKLVEKERPEVWDVLDEVIREHPVMLNRAPTLHRLGIQAFEPKLIEGKAIQLHPLVCAAFNADFDGDQMAVHVPLSLEAQLEARTLMMSTNNILSPANGKPIIVPSQDIVLGLYYLSIEKDNEPGEGMAFGSRAELEAALESDVITLHTKIKARWEGIDVDGNKITKVIETTPGRKMLVDLLPKHAKMQPEMIGELLTKKAIGALIDQVYRHCGQKATVIFCDQIMGLGFKEAAKAGISFGKDDMLIPDAKADLVGATRDMVSDYEQQYVDGLITKGEKYNKVVDAWAKCTDNVADAMMDEISKTSVGEDGRTSEVNSVYMMAHSGARGSKNQMKQLAGMRGLMAKPSGEIIETPIISNFKEGLTVLEYFNSTHGARKGLADTALKTANSGYLTRRLVDVAQDCIITEEDCGTSEGFEIQAVVDGGDVVVSLEQRILGRTLAAEVKDPASGEVICPADTYVDEDLAMAIEMAGVQSVIARSPLTCETRVGVCATCYGRDLARGTRVNIGEAVGVIAAQSIGEPGTQLTMRTFHIGGTAQVSEQSFIEAGSEGKVTFKNPSTVTNSDGDLIALSRNMQLVIVDTEGKERESYKLGYGTKLKVKEGDKTTRGQRLGEWDPYTAPVVSEVGGKVKFVDIAEGVSVKEETDEATGIASKVVIDWRGSAKANALQPTIVVQDENGEPIKLSSGSTASYMLAVGAILSVADGDTVRPGDIVARIPTEGAKTRDITGGLPRVAELFEARRPKDHAVIAEITGRVEFGRDYKNKRRIAIVPEGDEAEKVEYLVPKGKHLTCQEGDVIQKGEYLLDGHPAPHDILAILGVPALANYLIDEIQEVYRLQGVPINDKHIETIVRQMLQKIEVKDPGESTYLAAEQVDKIEFIETNERLEAEGKRMATGDPVLLGITKASLQTRSFISAASFQETTRVLTEAAVQGKEDTLEGLKENVIVGRLIPAGTGAIMRQYQVIADDLDADMLAEREAAVEAEGLPTEIAEAAAEEMAAEEGAS.

Cys-71, Cys-73, Cys-86, and Cys-89 together coordinate Zn(2+). Residues Asp-462, Asp-464, and Asp-466 each coordinate Mg(2+). Positions 810, 884, 891, and 894 each coordinate Zn(2+).

Belongs to the RNA polymerase beta' chain family. The RNAP catalytic core consists of 2 alpha, 1 beta, 1 beta' and 1 omega subunit. When a sigma factor is associated with the core the holoenzyme is formed, which can initiate transcription. The cofactor is Mg(2+). Zn(2+) serves as cofactor.

The enzyme catalyses RNA(n) + a ribonucleoside 5'-triphosphate = RNA(n+1) + diphosphate. Its function is as follows. DNA-dependent RNA polymerase catalyzes the transcription of DNA into RNA using the four ribonucleoside triphosphates as substrates. This chain is DNA-directed RNA polymerase subunit beta', found in Maricaulis maris (strain MCS10) (Caulobacter maris).